We begin with the raw amino-acid sequence, 698 residues long: MPEEASLPPAKRFRPGSCPPGRRVVMLLTAGGGGGAGGGRRQTPPLAQPSASPYREALELQRRSLPIFRARGQLLAQLRNLDNAVLIGETGSGKTTQIPQYLYEGGISRQGIIAVTQPRRVAAISLATRVSDEKRTELGKLVGYTVRFEDVTSEDTRIKFLTDGMLLREAISDSLLRKYSCVILDEAHERTIHTDVLFGVVKTAQKRRKELGKLPLKVIVMSATMDVDLFSQYFNRAPVLYLEGRQHPIQIFYTKQPQQDYLHAALVSVFQIHQEAPASQDILVFLTGQEEIEAMSKTCRDIARHLPDGCPSMLVLPLYASLPYSQQLRVFQGAPKGYRKVIISTNIAETSITITGIKYVVDTGMVKAKKYNPDSGLEVLAVQRVSKTQAWQRTGRAGREDSGICYRLYTEDEFEKFEKMTVPEIQRCNLASVILQLLAMKVPNVLTFDFMSKPSPDHIEAAIAQLDLLGALEHKDDQLTLTPIGRKMAAFPLEPRFAKTILLSSKFHCTEEILTIVSLLSVDSVLYNPPARRDEVQSVRKKFISSEGDHITLLNIYRTFKNIGGNKDWCKENFVNSKNMLLVAEVRAQLREICLKMSMPIMSSRGDMESVRRCMAHSLFMNTAELQTDGTYATTDTHQPVAIHPSSVLFHCKPACVVYTSLLYTNKCYMRDLCVVDAEWLYEAAPDYFRRKLRTARN.

2 disordered regions span residues 1–20 (MPEE…SCPP) and 29–50 (TAGG…AQPS). The required for nucleolar location stretch occupies residues 1–71 (MPEEASLPPA…RRSLPIFRAR (71 aa)). Gly residues predominate over residues 30 to 40 (AGGGGGAGGGR). The 169-residue stretch at 75–243 (LAQLRNLDNA…FNRAPVLYLE (169 aa)) folds into the Helicase ATP-binding domain. Position 88-95 (88-95 (GETGSGKT)) interacts with ATP. The short motif at 185–188 (DEAH) is the DEAH box element. Residues 271–441 (QIHQEAPASQ…SVILQLLAMK (171 aa)) enclose the Helicase C-terminal domain. The tract at residues 462–553 (AIAQLDLLGA…ISSEGDHITL (92 aa)) is HA2; required for interaction with EIF3G and RPL26. Residues 536–550 (VQSVRKKFISSEGDH) carry the Critical for rDNA-binding motif.

It belongs to the DEAD box helicase family. DEAH subfamily. As to quaternary structure, interacts with UBTF. Interacts with DDX3X, EIF3G and EIF3H; the interaction is independent of RNA. Interacts (via HA2 region and Helicase C-terminal domain) with the components of the large ribosomal subunit RPL3, RPL7, RPL26 and RPL27. Binds to mRNA. Interacts (via the helicase C-terminal domain) with MAVS. Binds to double-stranded RNA (via the helicase C-terminal domain). Ubiquitinated, leading to its degradation by the proteasome. Deubiquitinated by USP36.

The protein localises to the nucleus. It is found in the nucleolus. It localises to the nucleoplasm. The protein resides in the cytoplasm. Its subcellular location is the inflammasome. The catalysed reaction is ATP + H2O = ADP + phosphate + H(+). Implicated in nucleolar organization, ribosome biogenesis, protein synthesis and cytoplasmic dsRNA sensing. Stimulates RNA polymerase I transcription of the 47S precursor rRNA. Associates with ribosomal DNA (rDNA) loci where it is involved in POLR1A recruitment. In the cytoplasm, promotes elongation-competent 80S ribosome assembly at the late stage of mRNA translation initiation. Senses cytosolic dsRNA mediating NLRP3 inflammasome formation in macrophages and type I interferon production in myeloid dendritic cells. Required for NLRP3 activation induced by viral dsRNA and bacterial RNA. In dendritic cells, required for induction of type I interferon production induced by cytoplasmic dsRNA via the activation of MAPK and NF-kappa-B signaling pathways. The polypeptide is ATP-dependent RNA helicase DHX33 (Mus musculus (Mouse)).